We begin with the raw amino-acid sequence, 166 residues long: Photosystem I assembly protein Ycf3 (166 aa).

TPR repeat units follow at residues 31-64 (AFKY…EEDP), 68-101 (SYIL…NPNL), and 116-149 (GEQA…APNN).

Belongs to the Ycf3 family.

It is found in the cellular thylakoid membrane. In terms of biological role, essential for the assembly of the photosystem I (PSI) complex. May act as a chaperone-like factor to guide the assembly of the PSI subunits. The polypeptide is Photosystem I assembly protein Ycf3 (Acaryochloris marina (strain MBIC 11017)).